A 233-amino-acid polypeptide reads, in one-letter code: Transcriptional regulatory protein WalR (233 aa).

The 114-residue stretch at K4–L117 folds into the Response regulatory domain. Position 53 is a 4-aspartylphosphate (D53). The segment at residues T132–Q231 is a DNA-binding region (ompR/PhoB-type).

Phosphorylated by WalK.

It is found in the cytoplasm. Its function is as follows. Member of the two-component regulatory system WalK/WalR. The sequence is that of Transcriptional regulatory protein WalR (walR) from Staphylococcus haemolyticus (strain JCSC1435).